A 188-amino-acid polypeptide reads, in one-letter code: Elongation factor P (188 aa).

It belongs to the elongation factor P family.

It localises to the cytoplasm. Its pathway is protein biosynthesis; polypeptide chain elongation. Functionally, involved in peptide bond synthesis. Stimulates efficient translation and peptide-bond synthesis on native or reconstituted 70S ribosomes in vitro. Probably functions indirectly by altering the affinity of the ribosome for aminoacyl-tRNA, thus increasing their reactivity as acceptors for peptidyl transferase. The sequence is that of Elongation factor P from Bdellovibrio bacteriovorus (strain ATCC 15356 / DSM 50701 / NCIMB 9529 / HD100).